A 123-amino-acid chain; its full sequence is Small ribosomal subunit protein uS13 (123 aa).

A compositionally biased stretch (basic residues) spans 99 to 113; that stretch reads RGQRTHTNARTRKGG. Positions 99-123 are disordered; it reads RGQRTHTNARTRKGGSRLAVAAKKK.

This sequence belongs to the universal ribosomal protein uS13 family. In terms of assembly, part of the 30S ribosomal subunit. Forms a loose heterodimer with protein S19. Forms two bridges to the 50S subunit in the 70S ribosome.

Functionally, located at the top of the head of the 30S subunit, it contacts several helices of the 16S rRNA. In the 70S ribosome it contacts the 23S rRNA (bridge B1a) and protein L5 of the 50S subunit (bridge B1b), connecting the 2 subunits; these bridges are implicated in subunit movement. Contacts the tRNAs in the A and P-sites. The protein is Small ribosomal subunit protein uS13 of Anaplasma phagocytophilum (strain HZ).